A 364-amino-acid polypeptide reads, in one-letter code: Lipoyl synthase, mitochondrial (364 aa).

[4Fe-4S] cluster-binding residues include Cys99, Cys104, Cys110, Cys130, Cys134, Cys137, and Ser345. The Radical SAM core domain occupies 116-334 (HSTQTATIML…EQRGNELGFL (219 aa)).

Belongs to the radical SAM superfamily. Lipoyl synthase family. It depends on [4Fe-4S] cluster as a cofactor.

It localises to the mitochondrion. It carries out the reaction [[Fe-S] cluster scaffold protein carrying a second [4Fe-4S](2+) cluster] + N(6)-octanoyl-L-lysyl-[protein] + 2 oxidized [2Fe-2S]-[ferredoxin] + 2 S-adenosyl-L-methionine + 4 H(+) = [[Fe-S] cluster scaffold protein] + N(6)-[(R)-dihydrolipoyl]-L-lysyl-[protein] + 4 Fe(3+) + 2 hydrogen sulfide + 2 5'-deoxyadenosine + 2 L-methionine + 2 reduced [2Fe-2S]-[ferredoxin]. The protein operates within protein modification; protein lipoylation via endogenous pathway; protein N(6)-(lipoyl)lysine from octanoyl-[acyl-carrier-protein]: step 2/2. In terms of biological role, catalyzes the radical-mediated insertion of two sulfur atoms into the C-6 and C-8 positions of the octanoyl moiety bound to the lipoyl domains of lipoate-dependent enzymes, thereby converting the octanoylated domains into lipoylated derivatives. This Drosophila mojavensis (Fruit fly) protein is Lipoyl synthase, mitochondrial.